The sequence spans 383 residues: 1-deoxy-D-xylulose 5-phosphate reductoisomerase (383 aa).

NADPH contacts are provided by T10, G11, S12, I13, G36, K37, N38, and N122. K123 is a binding site for 1-deoxy-D-xylulose 5-phosphate. Residue E124 coordinates NADPH. D148 contacts Mn(2+). Positions 149, 150, 174, and 197 each coordinate 1-deoxy-D-xylulose 5-phosphate. Residue E150 coordinates Mn(2+). NADPH is bound at residue G203. Residues S210, N215, K216, and E219 each coordinate 1-deoxy-D-xylulose 5-phosphate. A Mn(2+)-binding site is contributed by E219.

It belongs to the DXR family. The cofactor is Mg(2+). Mn(2+) is required as a cofactor.

It carries out the reaction 2-C-methyl-D-erythritol 4-phosphate + NADP(+) = 1-deoxy-D-xylulose 5-phosphate + NADPH + H(+). It functions in the pathway isoprenoid biosynthesis; isopentenyl diphosphate biosynthesis via DXP pathway; isopentenyl diphosphate from 1-deoxy-D-xylulose 5-phosphate: step 1/6. Its function is as follows. Catalyzes the NADPH-dependent rearrangement and reduction of 1-deoxy-D-xylulose-5-phosphate (DXP) to 2-C-methyl-D-erythritol 4-phosphate (MEP). In Bacillus licheniformis (strain ATCC 14580 / DSM 13 / JCM 2505 / CCUG 7422 / NBRC 12200 / NCIMB 9375 / NCTC 10341 / NRRL NRS-1264 / Gibson 46), this protein is 1-deoxy-D-xylulose 5-phosphate reductoisomerase.